The sequence spans 337 residues: Ribosomal RNA small subunit methyltransferase C (337 aa).

This sequence belongs to the methyltransferase superfamily. RsmC family. As to quaternary structure, monomer.

The protein resides in the cytoplasm. It catalyses the reaction guanosine(1207) in 16S rRNA + S-adenosyl-L-methionine = N(2)-methylguanosine(1207) in 16S rRNA + S-adenosyl-L-homocysteine + H(+). Functionally, specifically methylates the guanine in position 1207 of 16S rRNA in the 30S particle. The protein is Ribosomal RNA small subunit methyltransferase C of Acinetobacter baumannii (strain ACICU).